Here is a 239-residue protein sequence, read N- to C-terminus: Ribosomal RNA small subunit methyltransferase G (239 aa).

S-adenosyl-L-methionine-binding positions include Gly-105, Leu-110, 156 to 157, and Arg-169; that span reads VE.

Belongs to the methyltransferase superfamily. RNA methyltransferase RsmG family.

Its subcellular location is the cytoplasm. The enzyme catalyses guanosine(527) in 16S rRNA + S-adenosyl-L-methionine = N(7)-methylguanosine(527) in 16S rRNA + S-adenosyl-L-homocysteine. Its function is as follows. Specifically methylates the N7 position of guanine in position 527 of 16S rRNA. The polypeptide is Ribosomal RNA small subunit methyltransferase G (Verminephrobacter eiseniae (strain EF01-2)).